A 120-amino-acid polypeptide reads, in one-letter code: Transcription elongation factor SPT4 (120 aa).

The interval 1–39 is interaction with spt-5; sequence MAASIPSDLRNLRACLLCSLIKSVDAFQTDGCENCDEVL. The C4-type zinc-finger motif lies at 15-35; that stretch reads CLLCSLIKSVDAFQTDGCENC.

The protein belongs to the SPT4 family. In terms of assembly, interacts with spt-5 to form DSIF. DSIF interacts with RNA polymerase II and with the positive transcription elongation factor b complex (P-TEFb complex), which is composed of cdk-9 and cyclin-T.

It localises to the nucleus. May function as a component of the DRB sensitivity-inducing factor complex (DSIF complex), which regulates transcription elongation by RNA polymerase II. DSIF may enhance transcriptional pausing at sites proximal to the promoter, which may in turn facilitate the assembly of an elongation competent RNA polymerase II complex. The sequence is that of Transcription elongation factor SPT4 (spt-4) from Caenorhabditis briggsae.